We begin with the raw amino-acid sequence, 1321 residues long: Serine/threonine-protein kinase SIK3 (1321 aa).

A disordered region spans residues 1–59; it reads MAAAAASGAGGAAGAGTGGAGPAGRLLPPPAPGSPAAPAAVSPAAGQPRPPAPASRGPM. Over residues 8 to 22 the composition is skewed to gly residues; that stretch reads GAGGAAGAGTGGAGP. Low complexity predominate over residues 36–47; that stretch reads AAPAAVSPAAGQ. One can recognise a Protein kinase domain in the interval 66-317; the sequence is YEIDRTIGKG…MEQICKHKWM (252 aa). Threonine 71 is modified (phosphothreonine). ATP contacts are provided by residues 72–80 and lysine 95; that span reads IGKGNFAVV. Phosphothreonine is present on glutamate 113. Catalysis depends on aspartate 188, which acts as the Proton acceptor. The residue at position 221 (threonine 221) is a Phosphothreonine; by LKB1. Residues 344–384 form the UBA domain; sequence PLNEDVLLAMEDMGLDKEQTLQSLRSDAYDHYSAIYSLLCD. Threonine 469 carries the phosphothreonine modification. Phosphoserine occurs at positions 551, 591, and 592. The interval 585–614 is disordered; the sequence is TPVDEESSDGEPDQEAVQSSTYKDSNTLHL. Acidic residues predominate over residues 587–598; it reads VDEESSDGEPDQ. Residues 600-613 show a composition bias toward polar residues; the sequence is AVQSSTYKDSNTLH. Phosphoserine is present on residues serine 626 and serine 647. A disordered region spans residues 727–772; that stretch reads IQPSSPPPNHPNNHLFRQPSNSPPPMSSAMIQPHGAASSSQFQGLP. Positions 763–772 are enriched in polar residues; sequence ASSSQFQGLP. At serine 866 the chain carries Phosphoserine. Positions 894–945 are disordered; the sequence is LFSDQSRGSPSSYSPSTGVGFSPTQALKVPPLDQFPTFPPSAHQQPPHYTTS. The span at 896 to 909 shows a compositional bias: low complexity; that stretch reads SDQSRGSPSSYSPS. Polar residues predominate over residues 935–945; the sequence is AHQQPPHYTTS. Serine 978 carries the post-translational modification Phosphoserine. Arginine 986 bears the Omega-N-methylarginine mark. The span at 1256–1265 shows a compositional bias: polar residues; the sequence is SLMGSQQFQD. The disordered stretch occupies residues 1256-1289; sequence SLMGSQQFQDGENEECGASLGGHEHPDLSDGSQH.

This sequence belongs to the protein kinase superfamily. CAMK Ser/Thr protein kinase family. SNF1 subfamily. As to quaternary structure, binds to and is activated by YWHAZ when phosphorylated on Thr-221. Interacts with 14-3-3 proteins. Interacts with HDAC4; this interaction leads to HDAC4 retention in the cytoplasm. Interacts with DEPTOR, MLST8/GbetaL, RICTOR and RPTOR. Requires Mg(2+) as cofactor. Phosphorylated at Thr-221 by STK11/LKB1 in complex with STE20-related adapter-alpha (STRADA) pseudo kinase and CAB39. Phosphorylation at Thr-221 is inhibited in response to PTHLH/PTHrP. Phosphorylated at Thr-469 and Ser-551 in response to cAMP signaling. As to expression, expressed in chondrocytes.

Its subcellular location is the cytoplasm. It carries out the reaction L-seryl-[protein] + ATP = O-phospho-L-seryl-[protein] + ADP + H(+). The catalysed reaction is L-threonyl-[protein] + ATP = O-phospho-L-threonyl-[protein] + ADP + H(+). Activated by phosphorylation on Thr-221. Functionally, positive regulator of mTOR signaling that functions by triggering the degradation of DEPTOR, an mTOR inhibitor. Involved in the dynamic regulation of mTOR signaling in chondrocyte differentiation during skeletogenesis. Negatively regulates cAMP signaling pathway possibly by acting on CRTC2/TORC2 and CRTC3/TORC3. Prevents HDAC4 translocation to the nucleus. The polypeptide is Serine/threonine-protein kinase SIK3 (Homo sapiens (Human)).